The sequence spans 852 residues: Homeobox-leucine zipper protein ATHB-14 (852 aa).

The tract at residues Met-1 to Lys-25 is disordered. Residues Met-7 to Asp-22 are compositionally biased toward basic and acidic residues. A DNA-binding region (homeobox) is located at residues Asp-22–Lys-85. A coiled-coil region spans residues Arg-80–Asn-122. Positions Arg-80–His-130 are ZIP domain. Residues His-130 to Gly-148 show a composition bias toward polar residues. The interval His-130–Asn-166 is disordered. Residues Gln-149–His-160 are compositionally biased toward low complexity. The region spanning Asp-164–Gln-392 is the START domain.

Belongs to the HD-ZIP homeobox family. Class III subfamily. Homodimer. Heterodimer with ZPR3. Interacts with ESR1 and ESR2. Interacts with ZPR3. Expressed in the center of the meristem and on the adaxial side of the leaves.

It is found in the nucleus. Inhibited by ZPR3. Its function is as follows. Probable transcription factor involved in the determination of adaxial-abaxial polarity in ovule primordium. Specifies adaxial leaf fates. The protein is Homeobox-leucine zipper protein ATHB-14 (ATHB-14) of Arabidopsis thaliana (Mouse-ear cress).